The chain runs to 253 residues: UPF0246 protein LBA1843 (253 aa).

The protein belongs to the UPF0246 family.

The protein is UPF0246 protein LBA1843 of Lactobacillus acidophilus (strain ATCC 700396 / NCK56 / N2 / NCFM).